Reading from the N-terminus, the 951-residue chain is Zinc fingers and homeoboxes protein 3 (951 aa).

The tract at residues 1–66 (MASKRKSTTP…SSTDGSALAN (66 aa)) is disordered. A compositionally biased stretch (low complexity) spans 42–58 (PSEAPEASSEAAPNPSS). C2H2-type zinc fingers lie at residues 77–100 (YSCK…TSEH) and 109–132 (FVCT…AKCH). The interval 198 to 249 (KENAPTQPGGEALPKPLAGETEGKEGDHTFINGATPVSQASANSTKPPHTAN) is disordered. Residues 232–244 (TPVSQASANSTKP) are compositionally biased toward polar residues. The required for homodimerization and interaction with NFYA stretch occupies residues 237 to 481 (ASANSTKPPH…LLTACPSITS (245 aa)). Positions 297–495 (LSSIPTYNAA…DANIYKNKKS (199 aa)) are required for repressor activity. DNA-binding regions (homeobox) lie at residues 298 to 357 (SSIP…GISW) and 487 to 546 (ANIY…RNLK). The tract at residues 490 to 548 (YKNKKSHEQLSALKGSFCRNQFPGQSEVEHLTKVTGLSTREVRKWFSDRRYHCRNLKGT) is required for nuclear localization. Serine 597 carries the phosphoserine modification. Positions 605–664 (TPTKYKERAPEQLRVLESSFAQNPLPPEEELDRLRSETKMTRREIDGWFSERRKRVNAEE) form a DNA-binding region, homeobox 3. Disordered regions lie at residues 621 to 642 (ESSF…RSET) and 661 to 702 (NAEE…NGSS). Positions 661 to 674 (NAEETKKADGHAPQ) are enriched in basic and acidic residues. The span at 675 to 690 (EEAEGAEEEGRDEELA) shows a compositional bias: acidic residues. Serine 701 and serine 716 each carry phosphoserine. 2 consecutive DNA-binding regions (homeobox) follow at residues 759–818 (PSRV…KNGQ) and 830–889 (FPPG…TRAV). Residues 885-951 (ETRAVADTSS…PQSGRQLETD (67 aa)) form a disordered region. Residues serine 922 and serine 941 each carry the phosphoserine modification. Residues 937-951 (FDTSSPQSGRQLETD) are compositionally biased toward polar residues.

It belongs to the ZHX family. Homodimer (via homeobox domain 1). Heterodimer with ZHX1 (via homeobox domain 1). Heterodimer with ZHX2 (via homeobox domain 1). Heterodimerization with ZHX1 is a prerequisite for repressor activity. Interacts with NFYA. In terms of tissue distribution, widely expressed.

It is found in the cytoplasm. The protein resides in the nucleus. Acts as a transcriptional repressor. Involved in the early stages of mesenchymal stem cell (MSC) osteogenic differentiation. Is a regulator of podocyte gene expression during primary glomerula disease. Binds to promoter DNA. The sequence is that of Zinc fingers and homeoboxes protein 3 (Zhx3) from Rattus norvegicus (Rat).